A 113-amino-acid polypeptide reads, in one-letter code: Large ribosomal subunit protein bL17 (113 aa).

This sequence belongs to the bacterial ribosomal protein bL17 family. Part of the 50S ribosomal subunit. Contacts protein L32.

The protein is Large ribosomal subunit protein bL17 of Clostridium tetani (strain Massachusetts / E88).